Here is a 439-residue protein sequence, read N- to C-terminus: MLKVYIETMGCAMNSRDSEHLLSELSKLDYKETNDPKIADLILINTCSVREKPERKLFSEIGQFAKIKKPNAKIGVCGCTASHMGADILKKSPSVSFVLGARNVSKISQVIHKEKAVEVAIDYDESSYAFEFFEKKAEVRSLLNISIGCDKKCTYCIVPHTRGKEISIPMDLILKEAEKLANNGTKELMLLGQNVNNYGVRFSSEHAKVNFSDLLDKLSEIPGIERIRFTSPHPLHMNDEFLERFAKNPKVCKSIHMPLQSGSSAVLKMMRRGYNKEWFLNRVEKLKALVPEVGISTDIIVGFPNESDKDFEDTMEVLEKVCFDTLYSFIYSPRPFTEAGAWKERVPLEVSSLRLERLQNRHKEILEEKARLEVGKTHVVLVENRHEVDGQIVGFEGRSDTGKFIEVTCKEKRNPGELVEVEIISHVKGRLMATTKNNQ.

The 115-residue stretch at Leu-2–Ala-116 folds into the MTTase N-terminal domain. The [4Fe-4S] cluster site is built by Cys-11, Cys-47, Cys-79, Cys-149, Cys-153, and Cys-156. Positions Lys-135–Glu-368 constitute a Radical SAM core domain. The TRAM domain occupies Arg-371–Asn-437.

This sequence belongs to the methylthiotransferase family. MiaB subfamily. As to quaternary structure, monomer. It depends on [4Fe-4S] cluster as a cofactor.

The protein resides in the cytoplasm. The enzyme catalyses N(6)-dimethylallyladenosine(37) in tRNA + (sulfur carrier)-SH + AH2 + 2 S-adenosyl-L-methionine = 2-methylsulfanyl-N(6)-dimethylallyladenosine(37) in tRNA + (sulfur carrier)-H + 5'-deoxyadenosine + L-methionine + A + S-adenosyl-L-homocysteine + 2 H(+). Catalyzes the methylthiolation of N6-(dimethylallyl)adenosine (i(6)A), leading to the formation of 2-methylthio-N6-(dimethylallyl)adenosine (ms(2)i(6)A) at position 37 in tRNAs that read codons beginning with uridine. The chain is tRNA-2-methylthio-N(6)-dimethylallyladenosine synthase from Helicobacter acinonychis (strain Sheeba).